The sequence spans 599 residues: mRNA export factor MEX67 (599 aa).

Ser2 is subject to N-acetylserine. LRR repeat units follow at residues 163 to 184 (IVES…STLA) and 189 to 210 (NLKN…EVWK). The region spanning 224–262 (NPITTDKLYRTEMLRLFPKLVVLDNVIVRDEQKLQTVYS) is the LRRCT domain. One can recognise an NTF2 domain in the interval 280–467 (SSTDFATNFL…VIIASDLLTV (188 aa)). Residues 408 to 439 (KPELESNKKTGKNNYQKNRRYNHGYNSTSNNK) form a disordered region. In terms of domain architecture, TAP-C spans 546 to 599 (PVQLELLNKLHLETKLNAEYTFMLAEQSNWNYEVAIKGFQSSMNGIPREAFVQF).

Belongs to the NXF family. Interacts with nucleoporin complex NUP84 and MTR2. Interacts with MIP6.

It is found in the nucleus. The protein localises to the cytoplasm. Functionally, involved in the export of mRNA from the nucleus to the cytoplasm. The chain is mRNA export factor MEX67 (MEX67) from Saccharomyces cerevisiae (strain ATCC 204508 / S288c) (Baker's yeast).